The following is a 75-amino-acid chain: Small ribosomal subunit protein bS18 (75 aa).

This sequence belongs to the bacterial ribosomal protein bS18 family. In terms of assembly, part of the 30S ribosomal subunit. Forms a tight heterodimer with protein bS6.

In terms of biological role, binds as a heterodimer with protein bS6 to the central domain of the 16S rRNA, where it helps stabilize the platform of the 30S subunit. The protein is Small ribosomal subunit protein bS18 of Shewanella halifaxensis (strain HAW-EB4).